Consider the following 451-residue polypeptide: Bifunctional protein GlmU (451 aa).

Residues 1–231 form a pyrophosphorylase region; that stretch reads MDSPLAIIVL…ADEVAGINSR (231 aa). UDP-N-acetyl-alpha-D-glucosamine is bound by residues 10-13, Lys-24, Gln-74, 79-80, 102-104, Gly-142, Glu-156, Asn-171, and Asn-229; these read LAAG, GT, and YGD. Asp-104 serves as a coordination point for Mg(2+). Asn-229 provides a ligand contact to Mg(2+). The interval 232 to 252 is linker; that stretch reads GELAEAEGRWQQRRRAAAMAD. Residues 253–451 are N-acetyltransferase; that stretch reads GASLIAPETV…MKKKKAEKKS (199 aa). Positions 318 and 336 each coordinate UDP-N-acetyl-alpha-D-glucosamine. The active-site Proton acceptor is His-348. Residues Tyr-351 and Asn-362 each contribute to the UDP-N-acetyl-alpha-D-glucosamine site. Acetyl-CoA is bound by residues Ala-365, 371 to 372, Ser-390, Ala-408, and Arg-425; that span reads NY.

It in the N-terminal section; belongs to the N-acetylglucosamine-1-phosphate uridyltransferase family. The protein in the C-terminal section; belongs to the transferase hexapeptide repeat family. In terms of assembly, homotrimer. Requires Mg(2+) as cofactor.

It is found in the cytoplasm. It catalyses the reaction alpha-D-glucosamine 1-phosphate + acetyl-CoA = N-acetyl-alpha-D-glucosamine 1-phosphate + CoA + H(+). The catalysed reaction is N-acetyl-alpha-D-glucosamine 1-phosphate + UTP + H(+) = UDP-N-acetyl-alpha-D-glucosamine + diphosphate. Its pathway is nucleotide-sugar biosynthesis; UDP-N-acetyl-alpha-D-glucosamine biosynthesis; N-acetyl-alpha-D-glucosamine 1-phosphate from alpha-D-glucosamine 6-phosphate (route II): step 2/2. It participates in nucleotide-sugar biosynthesis; UDP-N-acetyl-alpha-D-glucosamine biosynthesis; UDP-N-acetyl-alpha-D-glucosamine from N-acetyl-alpha-D-glucosamine 1-phosphate: step 1/1. The protein operates within bacterial outer membrane biogenesis; LPS lipid A biosynthesis. Its function is as follows. Catalyzes the last two sequential reactions in the de novo biosynthetic pathway for UDP-N-acetylglucosamine (UDP-GlcNAc). The C-terminal domain catalyzes the transfer of acetyl group from acetyl coenzyme A to glucosamine-1-phosphate (GlcN-1-P) to produce N-acetylglucosamine-1-phosphate (GlcNAc-1-P), which is converted into UDP-GlcNAc by the transfer of uridine 5-monophosphate (from uridine 5-triphosphate), a reaction catalyzed by the N-terminal domain. The polypeptide is Bifunctional protein GlmU (Novosphingobium aromaticivorans (strain ATCC 700278 / DSM 12444 / CCUG 56034 / CIP 105152 / NBRC 16084 / F199)).